A 363-amino-acid polypeptide reads, in one-letter code: Trichocyst matrix protein T4-B (363 aa).

Positions 1-17 (MARSLTILAIVFAVATA) are cleaved as a signal peptide. A propeptide spanning residues 18 to 52 (RVTKSESPKEILAQVNKDSFGNSILSVLQLQLATG) is cleaved from the precursor. Residues 85-119 (VAFEKIIADLEQEIAYHQTQIVALSNLRDSTTEAL) are a coiled coil. A propeptide spanning residues 190 to 221 (RFEKVQAKLMESKHALFKPLINALTQLASKVD) is cleaved from the precursor. A coiled-coil region spans residues 244–352 (ASLLATEERQ…EVLTQKLSAA (109 aa)).

Belongs to the TMP family. Post-translationally, two components are produced by post-translational processing from the precursor peptide.

Its subcellular location is the trichocyst. Functionally, structural protein that crystallize inside the trichocyst matrix. The polypeptide is Trichocyst matrix protein T4-B (T4B) (Paramecium tetraurelia).